The primary structure comprises 362 residues: MTTVPPTRDTAAIRIWLSIVAGLIALMVLVGGATRLTESGLSIVEWKPVTGTLPPLSEQAWSDAFEAYKTIPQYRQMNAGMTLHEFKTIFWWEWAHRLLGRVIGMVYLLPFLWFLWRGAVSGPLGRRLWLIFGLGALQGAVGWWMVASGLTERTEVAPVRLATHLSLALLIFASIVWTLRRLKPRDEAEVPGRLRLTAWALVGVTFVQLYLGALVAGLRAGLVYNTWPEIDGGLIPAAANLWAHAPWWINLFENHLTVQFMHRMTAYTLLALAAWHAFDVMRAGAGRDAVRGAHRLLAAILVQAVLGIATLLMVVPISLALLHQGTALIVLTFAVLQAERLSPRRVAAVAVPQAAVAAGQAG.

5 helical membrane-spanning segments follow: residues 11-31 (AAIR…VLVG), 102-122 (VIGM…AVSG), 128-148 (LWLI…MVAS), 159-179 (VRLA…VWTL), and 198-218 (AWAL…VAGL). H262 provides a ligand contact to heme. A run of 3 helical transmembrane segments spans residues 264–286 (MTAY…AGAG), 297–317 (LAAI…VVPI), and 318–338 (SLAL…VLQA). H323 is a binding site for heme.

This sequence belongs to the COX15/CtaA family. Type 2 subfamily. As to quaternary structure, interacts with CtaB. Heme b serves as cofactor.

The protein localises to the cell membrane. It carries out the reaction Fe(II)-heme o + 2 A + H2O = Fe(II)-heme a + 2 AH2. It functions in the pathway porphyrin-containing compound metabolism; heme A biosynthesis; heme A from heme O: step 1/1. Functionally, catalyzes the conversion of heme O to heme A by two successive hydroxylations of the methyl group at C8. The first hydroxylation forms heme I, the second hydroxylation results in an unstable dihydroxymethyl group, which spontaneously dehydrates, resulting in the formyl group of heme A. The chain is Heme A synthase from Bradyrhizobium sp. (strain ORS 278).